Consider the following 37-residue polypeptide: MKVRSSVKKICTKCRLIRRKGTVMVICTNPKHKQRQG.

This sequence belongs to the bacterial ribosomal protein bL36 family.

The protein resides in the plastid. The protein localises to the chloroplast. This Tetradesmus obliquus (Green alga) protein is Large ribosomal subunit protein bL36c.